A 158-amino-acid polypeptide reads, in one-letter code: Endoribonuclease YbeY (158 aa).

Zn(2+) contacts are provided by histidine 114, histidine 118, and histidine 124.

Belongs to the endoribonuclease YbeY family. Zn(2+) serves as cofactor.

It is found in the cytoplasm. Its function is as follows. Single strand-specific metallo-endoribonuclease involved in late-stage 70S ribosome quality control and in maturation of the 3' terminus of the 16S rRNA. This is Endoribonuclease YbeY from Pasteurella multocida (strain Pm70).